The chain runs to 628 residues: Probable potassium transport system protein Kup (628 aa).

The next 12 membrane-spanning stretches (helical) occupy residues 20–40 (ALLT…SPLY), 63–83 (IISM…VMLV), 110–130 (FVAV…VITP), 151–171 (FILP…PLGT), 178–198 (FGPI…PQII), 212–232 (ALGL…AVVL), 256–276 (WFCV…ALVI), 296–316 (IPLV…VISG), 346–366 (IYMP…VLVF), 375–395 (AYGL…LIYV), 398–418 (TWWK…LLFA), and 422–442 (TKIH…IVVM).

Belongs to the HAK/KUP transporter (TC 2.A.72) family.

It is found in the cell membrane. The catalysed reaction is K(+)(in) + H(+)(in) = K(+)(out) + H(+)(out). In terms of biological role, transport of potassium into the cell. Likely operates as a K(+):H(+) symporter. The chain is Probable potassium transport system protein Kup from Corynebacterium glutamicum (strain R).